A 1184-amino-acid chain; its full sequence is Protocadherin-12 (1184 aa).

The first 24 residues, 1–24, serve as a signal peptide directing secretion; sequence MMQLLQLLLGLLGPGGYLFLLGDC. At 25–718 the chain is on the extracellular side; it reads QEVTTLTVKY…PGALSMSMLT (694 aa). Cadherin domains are found at residues 28–135, 136–244, 245–352, 355–460, and 461–565; these read TTLT…QPRF, PKGE…SPAF, AESS…IPSI, TWAS…APVF, and EKSR…APEV. N415 carries an N-linked (GlcNAc...) asparagine glycan. Residues N582, N659, and N662 are each glycosylated (N-linked (GlcNAc...) asparagine). In terms of domain architecture, Cadherin 6 spans 600 to 711; sequence PAGTDTPPLA…LRDSARKPGA (112 aa). The helical transmembrane segment at 719–739 threads the bilayer; that stretch reads VICLAVLLGIFGLILALFMSI. Over 740–1184 the chain is Cytoplasmic; the sequence is CRTEKKDNRA…RGSSSSSRCL (445 aa). 2 disordered regions span residues 854 to 928 and 973 to 1023; these read RQRN…ESGP and QFQP…DPEE. At S859 the chain carries Phosphoserine. Residues 1012 to 1023 are compositionally biased toward acidic residues; that stretch reads PEQEEGPLDPEE. S1062 is modified (phosphoserine). The interval 1153–1184 is disordered; the sequence is SAASGMKVQGDPGGKTGTEGKSRGSSSSSRCL. Residues 1175-1184 are compositionally biased toward low complexity; sequence RGSSSSSRCL.

In terms of processing, cleaved by ADAM10 close to the transmembrane domain to release the Protocadherin-12, secreted form in the serum. Cleavage results in reduced cellular adhesion in a cell migration assay. Expressed in highly vascularized tissues including the heart and placenta, but most tissues contain a low level of expression. Prominent expression in the spleen. Present in villous and extravillous trophoblast (at protein level).

It is found in the cell membrane. It localises to the cell junction. The protein localises to the secreted. Cellular adhesion molecule that may play an important role in cell-cell interactions at interendothelial junctions. Acts as a regulator of cell migration, probably via increasing cell-cell adhesion. Promotes homotypic calcium-dependent aggregation and adhesion and clusters at intercellular junctions. Unable to bind to catenins, weakly associates with the cytoskeleton. The chain is Protocadherin-12 from Homo sapiens (Human).